A 320-amino-acid polypeptide reads, in one-letter code: RNA-binding protein Musashi homolog 1 (320 aa).

Positions 1-14 are enriched in low complexity; sequence MTTTVSTGATAVAT. The tract at residues 1-48 is disordered; that stretch reads MTTTVSTGATAVATLRETSPPVDGHEEARLNADSDDGSHGSQDPGKMF. Threonine 18 bears the Phosphothreonine mark. A phosphoserine mark is found at serine 19 and serine 34. Positions 23–38 are enriched in basic and acidic residues; it reads DGHEEARLNADSDDGS. RRM domains are found at residues 45-124 and 134-211; these read GKMF…FPKR and KKVF…KAQP. 2 required for binding to target mRNAs regions span residues 88 to 93 and 177 to 182; these read FGFITF and FGFVTF.

It belongs to the Musashi family. Expressed in the gut and in AVA, AFD, RMD, RMED, RMEV, RMER and RMEL neurons (at protein level). In the tail expressed in neurons and all the ray sensilla. Expressed in male specific C1-C4 neurons.

It localises to the cytoplasm. Its subcellular location is the perikaryon. In terms of biological role, RNA binding protein that regulates the expression of target mRNAs at the translation level. Binds RNA containing the 5'-[GA]U(1-3)AGU-3' motif located in the 3' UTR of the target mRNA. Binds to the mRNA of three Arp2/3 complex components arx-1, arx-2 and arx-3 and negatively regulates their translation during association learning. Plays a role in time-dependent memory loss and the retention of conditioned behavior over time, probably through negative regulation of the Arp2/3 actin cytoskeleton branching complex and regulation of synapse size. Required for two aspects of male mating behavior: turning around the hermaphrodite head or tail and vulva location. The polypeptide is RNA-binding protein Musashi homolog 1 (Caenorhabditis elegans).